The following is a 237-amino-acid chain: MSQPIYKRILLKLSGEALQGEDGLGIDPAILDRMAVEIKELVEMGVEVGVVLGGGNLFRGAKLAKAGMNRVVGDHMGMLATVMNGLAMRDSLFRADVNAKLMSAFQLNGICDTYNWSEAIKMLREKRVVIFSAGTGNPFFTTDSTACLRGIEIEADVVLKATKVDGVYDCDPAKNPDAKLYKNLTYAEVIDKELKVMDLSAFTLARDHGMPIRVFNMGKPGALRQVVTGTEEGTTIC.

12-15 (KLSG) is a binding site for ATP. The involved in allosteric activation by GTP stretch occupies residues 20-25 (GEDGLG). G54 contributes to the UMP binding site. ATP contacts are provided by G55 and R59. UMP contacts are provided by residues D74 and 135–142 (TGNPFFTT). 3 residues coordinate ATP: T162, Y168, and D171.

Belongs to the UMP kinase family. In terms of assembly, homohexamer.

Its subcellular location is the cytoplasm. The catalysed reaction is UMP + ATP = UDP + ADP. It participates in pyrimidine metabolism; CTP biosynthesis via de novo pathway; UDP from UMP (UMPK route): step 1/1. With respect to regulation, allosterically activated by GTP. Inhibited by UTP. Functionally, catalyzes the reversible phosphorylation of UMP to UDP. The polypeptide is Uridylate kinase (Haemophilus influenzae (strain 86-028NP)).